The sequence spans 130 residues: Small ribosomal subunit protein uS8 (130 aa).

The protein belongs to the universal ribosomal protein uS8 family. Part of the 30S ribosomal subunit. Contacts proteins S5 and S12.

One of the primary rRNA binding proteins, it binds directly to 16S rRNA central domain where it helps coordinate assembly of the platform of the 30S subunit. This is Small ribosomal subunit protein uS8 from Aliivibrio salmonicida (strain LFI1238) (Vibrio salmonicida (strain LFI1238)).